The chain runs to 307 residues: Small ribosomal subunit biogenesis GTPase RsgA (307 aa).

The region spanning 78–240 (HKTAFGHLIA…VIDTPGIKEL (163 aa)) is the CP-type G domain. GTP is bound by residues 128 to 131 (NKSD) and 182 to 190 (GHSGVGKST). 4 residues coordinate Zn(2+): Cys264, Cys269, His271, and Cys277.

Belongs to the TRAFAC class YlqF/YawG GTPase family. RsgA subfamily. As to quaternary structure, monomer. Associates with 30S ribosomal subunit, binds 16S rRNA. Zn(2+) serves as cofactor.

The protein resides in the cytoplasm. Functionally, one of several proteins that assist in the late maturation steps of the functional core of the 30S ribosomal subunit. Helps release RbfA from mature subunits. May play a role in the assembly of ribosomal proteins into the subunit. Circularly permuted GTPase that catalyzes slow GTP hydrolysis, GTPase activity is stimulated by the 30S ribosomal subunit. In Cytophaga hutchinsonii (strain ATCC 33406 / DSM 1761 / CIP 103989 / NBRC 15051 / NCIMB 9469 / D465), this protein is Small ribosomal subunit biogenesis GTPase RsgA.